The following is a 282-amino-acid chain: Halorhodopsin (282 aa).

At 1 to 29 the chain is on the extracellular side; the sequence is MMETAADALASGTVPLEMTQTQIFEAIQG. A helical transmembrane segment spans residues 30-55; that stretch reads DTLLASSLWINIALAGLSILLFVYMG. Topologically, residues 56–61 are cytoplasmic; the sequence is RNLEDP. The helical transmembrane segment at 62–85 threads the bilayer; the sequence is RAQLIFVATLMVPLVSISSYTGLV. Residues 86 to 109 are Extracellular-facing; sequence SGLTVSFLEMPAGHALAGQEVLTP. The chain crosses the membrane as a helical span at residues 110–131; that stretch reads WGRYLTWALSTPMILVALGLLA. At 132-134 the chain is on the cytoplasmic side; the sequence is GSN. The helical transmembrane segment at 135 to 158 threads the bilayer; the sequence is ATKLFTAVTADIGMCVTGLAAALT. Topologically, residues 159–161 are extracellular; it reads TSS. A helical membrane pass occupies residues 162–184; the sequence is YLLRWVWYVISCAFFVVVLYVLL. The Cytoplasmic segment spans residues 185–196; the sequence is AEWAEDAEVAGT. Residues 197–220 form a helical membrane-spanning segment; the sequence is AEIFNTLKLLTVVLWLGYPIFWAL. Topologically, residues 221 to 229 are extracellular; that stretch reads GAEGLAVLD. A helical transmembrane segment spans residues 230-258; it reads VAVTSWAYSGMDIVAKYLFAFLLLRWVVD. Lys-245 bears the N6-(retinylidene)lysine mark. The Cytoplasmic portion of the chain corresponds to 259-282; the sequence is NERTVAGMAAGLGAPLARCAPADD.

This sequence belongs to the archaeal/bacterial/fungal opsin family.

The protein resides in the cell membrane. Its function is as follows. Light-driven chloride pump. The sequence is that of Halorhodopsin (hop) from Halorubrum sodomense.